Reading from the N-terminus, the 94-residue chain is Alpha-galactosyl-binding lectin (94 aa).

Homodimer. Post-translationally, contains three disulfide bonds.

In terms of biological role, alpha-galactosyl-binding lectin with preference for galactose-alpha-1,4-galactose. In Lyophyllum decastes (Fried chicken mushroom), this protein is Alpha-galactosyl-binding lectin.